Consider the following 434-residue polypeptide: Glycoprotein U20 (434 aa).

Residues 1–15 (MITVFVACLFQCVSS) form the signal peptide. Residues 322–342 (LLWIFIVIPIAAGCMFLYILT) traverse the membrane as a helical segment.

It is found in the host endoplasmic reticulum membrane. The protein localises to the host lysosome membrane. Functionally, plays a role in the down-regulation of the host stress-induced NKG2D ligand UBPL1, which enables immune cells expressing the NKG2D receptor to recognize and annihilate infected cells prior to viral spread. The chain is Glycoprotein U20 (U20) from Human herpesvirus 6B (strain Z29) (HHV-6 variant B).